The following is a 362-amino-acid chain: Uracil-DNA glycosylase (362 aa).

The disordered stretch occupies residues 28 to 97 (ASVAPNDPTE…AGPTEDPNFA (70 aa)). The active-site Proton acceptor is D205.

Belongs to the uracil-DNA glycosylase (UDG) superfamily. UNG family.

Its subcellular location is the host nucleus. The catalysed reaction is Hydrolyzes single-stranded DNA or mismatched double-stranded DNA and polynucleotides, releasing free uracil.. Excises uracil residues from the DNA which can arise as a result of misincorporation of dUMP residues by DNA polymerase or deamination of cytosines. Therefore may reduce deleterious uracil incorporation into the viral genome, particularly in terminally differentiated cells which lack DNA repair enzymes. In Psittacid herpesvirus 1 (isolate Amazon parrot/-/97-0001/1997) (PsHV-1), this protein is Uracil-DNA glycosylase (UL2).